A 78-amino-acid polypeptide reads, in one-letter code: DNA-directed RNA polymerase subunit omega (78 aa).

This sequence belongs to the RNA polymerase subunit omega family. In terms of assembly, in cyanobacteria the RNAP catalytic core is composed of 2 alpha, 1 beta, 1 beta', 1 gamma and 1 omega subunit. When a sigma factor is associated with the core the holoenzyme is formed, which can initiate transcription.

It catalyses the reaction RNA(n) + a ribonucleoside 5'-triphosphate = RNA(n+1) + diphosphate. Functionally, promotes RNA polymerase assembly. Latches the N- and C-terminal regions of the beta' subunit thereby facilitating its interaction with the beta and alpha subunits. The protein is DNA-directed RNA polymerase subunit omega of Prochlorococcus marinus (strain MIT 9301).